The following is a 245-amino-acid chain: Ubiquinone biosynthesis O-methyltransferase (245 aa).

Residues Arg-49, Gly-69, Asp-90, and Met-134 each contribute to the S-adenosyl-L-methionine site.

It belongs to the methyltransferase superfamily. UbiG/COQ3 family.

It carries out the reaction a 3-demethylubiquinol + S-adenosyl-L-methionine = a ubiquinol + S-adenosyl-L-homocysteine + H(+). The enzyme catalyses a 3-(all-trans-polyprenyl)benzene-1,2-diol + S-adenosyl-L-methionine = a 2-methoxy-6-(all-trans-polyprenyl)phenol + S-adenosyl-L-homocysteine + H(+). It participates in cofactor biosynthesis; ubiquinone biosynthesis. Its function is as follows. O-methyltransferase that catalyzes the 2 O-methylation steps in the ubiquinone biosynthetic pathway. The polypeptide is Ubiquinone biosynthesis O-methyltransferase (Vibrio cholerae serotype O1 (strain ATCC 39541 / Classical Ogawa 395 / O395)).